Consider the following 120-residue polypeptide: NAD(P)H-quinone oxidoreductase subunit 3 (120 aa).

3 consecutive transmembrane segments (helical) span residues 2-22, 64-84, and 89-109; these read FVLT…LVPV, MFAL…PWAV, and LGLL…VALV.

This sequence belongs to the complex I subunit 3 family. NDH-1 can be composed of about 15 different subunits; different subcomplexes with different compositions have been identified which probably have different functions.

The protein localises to the cellular thylakoid membrane. The catalysed reaction is a plastoquinone + NADH + (n+1) H(+)(in) = a plastoquinol + NAD(+) + n H(+)(out). The enzyme catalyses a plastoquinone + NADPH + (n+1) H(+)(in) = a plastoquinol + NADP(+) + n H(+)(out). In terms of biological role, NDH-1 shuttles electrons from an unknown electron donor, via FMN and iron-sulfur (Fe-S) centers, to quinones in the respiratory and/or the photosynthetic chain. The immediate electron acceptor for the enzyme in this species is believed to be plastoquinone. Couples the redox reaction to proton translocation, and thus conserves the redox energy in a proton gradient. Cyanobacterial NDH-1 also plays a role in inorganic carbon-concentration. The chain is NAD(P)H-quinone oxidoreductase subunit 3 (ndhC) from Synechocystis sp. (strain ATCC 27184 / PCC 6803 / Kazusa).